A 591-amino-acid chain; its full sequence is L-fucose isomerase (591 aa).

Residues glutamate 337 and aspartate 361 each act as proton acceptor in the active site. Residues glutamate 337, aspartate 361, and histidine 528 each contribute to the Mn(2+) site.

Belongs to the L-fucose isomerase family. In terms of assembly, homohexamer. Mn(2+) is required as a cofactor.

Its subcellular location is the cytoplasm. The catalysed reaction is L-fucose = L-fuculose. The protein operates within carbohydrate degradation; L-fucose degradation; L-lactaldehyde and glycerone phosphate from L-fucose: step 1/3. Its function is as follows. Converts the aldose L-fucose into the corresponding ketose L-fuculose. The chain is L-fucose isomerase from Escherichia coli O157:H7 (strain EC4115 / EHEC).